The following is a 718-amino-acid chain: Kinesin-2a (718 aa).

Positions 5 to 335 (NIKVIVRCRP…LRYADRAKQI (331 aa)) constitute a Kinesin motor domain. 97 to 104 (GQTGAGKT) lines the ATP pocket. Residues G100, G102, K103, T104, and W105 each coordinate ADP. T104 contacts Mg(2+). A coiled-coil region spans residues 432 to 477 (SRKAADELEAKRRALAEAKQKRESELEQKEALNKEAIVTLTDLKSQ).

This sequence belongs to the TRAFAC class myosin-kinesin ATPase superfamily. Kinesin family. Kinesin II subfamily. Monomer.

It localises to the cell projection. The protein resides in the cilium. Its subcellular location is the flagellum. The protein localises to the cytoplasm. It is found in the cytoskeleton. It localises to the flagellum axoneme. The protein resides in the flagellum basal body. In terms of biological role, involved in anterograde intraflagellar transport (IFT). Involved in flagellar assembly. The chain is Kinesin-2a from Giardia intestinalis (strain ATCC 50803 / WB clone C6) (Giardia lamblia).